Consider the following 555-residue polypeptide: Putative polyketide hydroxylase (555 aa).

Residues 16–45 (PVLVVGGSLVGLSTSVFLGRLGVRHMLVER) and 303–313 (YRAGRVFLAGD) each bind FAD. The disordered stretch occupies residues 366–395 (ATTARAAARSAEHSHPGFAPPPGTSGGPQG).

The protein belongs to the PheA/TfdB FAD monooxygenase family. The cofactor is FAD.

In terms of biological role, involved in developmentally regulated synthesis of a compound biosynthetically related to polyketide antibiotics which is essential for spore color in Streptomyces halstedii. This is Putative polyketide hydroxylase (schC) from Streptomyces halstedii.